Reading from the N-terminus, the 412-residue chain is 23S rRNA (uracil(747)-C(5))-methyltransferase (412 aa).

[4Fe-4S] cluster is bound by residues cysteine 63, cysteine 69, cysteine 72, and cysteine 139. Glutamine 255, tyrosine 281, glutamate 302, and aspartate 343 together coordinate S-adenosyl-L-methionine. Cysteine 369 (nucleophile) is an active-site residue.

This sequence belongs to the class I-like SAM-binding methyltransferase superfamily. RNA M5U methyltransferase family.

It catalyses the reaction uridine(747) in 23S rRNA + S-adenosyl-L-methionine = 5-methyluridine(747) in 23S rRNA + S-adenosyl-L-homocysteine + H(+). Catalyzes the formation of 5-methyl-uridine at position equivalent to 747 (m5U747) in 23S rRNA. The chain is 23S rRNA (uracil(747)-C(5))-methyltransferase from Pyrococcus horikoshii (strain ATCC 700860 / DSM 12428 / JCM 9974 / NBRC 100139 / OT-3).